A 67-amino-acid polypeptide reads, in one-letter code: Bombesin (67 aa).

An N-terminal signal peptide occupies residues Met1 to Leu30. Positions Asp31–Ala49 are excised as a propeptide. Position 50 is a pyrrolidone carboxylic acid (Gln50). Met64 bears the Methionine amide mark.

In terms of tissue distribution, expressed by the skin glands.

It localises to the secreted. Functionally, stimulates smooth muscle contraction in isolated rat stomach strip. The sequence is that of Bombesin from Rana shuchinae (Sichuan frog).